The sequence spans 226 residues: Thioredoxin domain-containing protein 9 (226 aa).

The 107-residue stretch at 74–180 (REIPSERDFF…TTETLEWRLG (107 aa)) folds into the Thioredoxin domain. 3 positions are modified to phosphoserine: S188, S221, and S223.

As to quaternary structure, forms ternary complexes with the chaperonin TCP1 complex, spanning the cylindrical chaperonin cavity and contacting at least 2 subunits.

The protein localises to the cytoplasm. The protein resides in the nucleus. It is found in the cytoskeleton. Its subcellular location is the microtubule organizing center. It localises to the centrosome. The protein localises to the midbody. Functionally, significantly diminishes the chaperonin TCP1 complex ATPase activity, thus negatively impacts protein folding, including that of actin or tubulin. This Homo sapiens (Human) protein is Thioredoxin domain-containing protein 9 (TXNDC9).